The chain runs to 425 residues: uncharacterized protein (425 aa).

Positions arginine 55–leucine 181 constitute an HD domain.

This is an uncharacterized protein from Mycoplasma pneumoniae (strain ATCC 29342 / M129 / Subtype 1) (Mycoplasmoides pneumoniae).